Reading from the N-terminus, the 218-residue chain is ER lumen protein-retaining receptor (218 aa).

At M1–N2 the chain is on the lumenal side. Residues L3 to I23 traverse the membrane as a helical segment. The Cytoplasmic portion of the chain corresponds to K24–S57. The helical transmembrane segment at L58–I78 threads the bilayer. Over A79–K94 the chain is Lumenal. The chain crosses the membrane as a helical span at residues I95 to I115. Topologically, residues G116–E123 are cytoplasmic. A helical membrane pass occupies residues I124–L144. The Lumenal portion of the chain corresponds to Q145–A152. The chain crosses the membrane as a helical span at residues L153–I173. Over Y174–K184 the chain is Cytoplasmic. A helical transmembrane segment spans residues I185–A205. Topologically, residues K206–Q218 are lumenal.

Belongs to the ERD2 family.

It localises to the endoplasmic reticulum membrane. Its function is as follows. Required for the retention of luminal endoplasmic reticulum proteins. Determines the specificity of the luminal ER protein retention system. Also required for normal vesicular traffic through the Golgi. The protein is ER lumen protein-retaining receptor (kdelr) of Dictyostelium discoideum (Social amoeba).